The following is a 383-amino-acid chain: 8-amino-7-oxononanoate synthase (383 aa).

Substrate is bound by residues R27 and R34. 114-115 (GY) contacts pyridoxal 5'-phosphate. H139 contacts substrate. Pyridoxal 5'-phosphate is bound by residues S187, 212–215 (DDAH), and 232–235 (TLSK). Position 235 is an N6-(pyridoxal phosphate)lysine (K235). Position 344 (T344) interacts with substrate.

Belongs to the class-II pyridoxal-phosphate-dependent aminotransferase family. BioF subfamily. As to quaternary structure, homodimer. Requires pyridoxal 5'-phosphate as cofactor.

The catalysed reaction is 6-carboxyhexanoyl-[ACP] + L-alanine + H(+) = (8S)-8-amino-7-oxononanoate + holo-[ACP] + CO2. It functions in the pathway cofactor biosynthesis; biotin biosynthesis. Functionally, catalyzes the decarboxylative condensation of pimeloyl-[acyl-carrier protein] and L-alanine to produce 8-amino-7-oxononanoate (AON), [acyl-carrier protein], and carbon dioxide. In Methylorubrum extorquens (strain CM4 / NCIMB 13688) (Methylobacterium extorquens), this protein is 8-amino-7-oxononanoate synthase.